The sequence spans 442 residues: tRNA-2-methylthio-N(6)-dimethylallyladenosine synthase (442 aa).

An MTTase N-terminal domain is found at Asn-3–Asn-120. The [4Fe-4S] cluster site is built by Cys-12, Cys-49, Cys-83, Cys-157, Cys-161, and Cys-164. A Radical SAM core domain is found at Arg-143–His-375. Positions Gln-378–Thr-440 constitute a TRAM domain.

This sequence belongs to the methylthiotransferase family. MiaB subfamily. Monomer. Requires [4Fe-4S] cluster as cofactor.

Its subcellular location is the cytoplasm. It carries out the reaction N(6)-dimethylallyladenosine(37) in tRNA + (sulfur carrier)-SH + AH2 + 2 S-adenosyl-L-methionine = 2-methylsulfanyl-N(6)-dimethylallyladenosine(37) in tRNA + (sulfur carrier)-H + 5'-deoxyadenosine + L-methionine + A + S-adenosyl-L-homocysteine + 2 H(+). Its function is as follows. Catalyzes the methylthiolation of N6-(dimethylallyl)adenosine (i(6)A), leading to the formation of 2-methylthio-N6-(dimethylallyl)adenosine (ms(2)i(6)A) at position 37 in tRNAs that read codons beginning with uridine. In Vesicomyosocius okutanii subsp. Calyptogena okutanii (strain HA), this protein is tRNA-2-methylthio-N(6)-dimethylallyladenosine synthase.